We begin with the raw amino-acid sequence, 289 residues long: NFU1 iron-sulfur cluster scaffold homolog, mitochondrial (289 aa).

The transit peptide at 1 to 56 (MAKLISYAKGGFLRNTRLTSRAVPQVYQHATSSRGFVHLTSSVAQSSAIHVSTPST) directs the protein to the mitochondrion. A nifU region spans residues 183–251 (IKELLDTRIR…IPEVESVEQV (69 aa)). C220 and C223 together coordinate [4Fe-4S] cluster. Residues 267-289 (ERNLKQKDTSSTAPVGIGGGPAN) are disordered.

This sequence belongs to the NifU family.

Its subcellular location is the mitochondrion. Its function is as follows. Molecular scaffold for [Fe-S] cluster assembly of mitochondrial iron-sulfur proteins. In Drosophila willistoni (Fruit fly), this protein is NFU1 iron-sulfur cluster scaffold homolog, mitochondrial.